The chain runs to 95 residues: Neutrophil antibiotic peptide NP-4 (95 aa).

The N-terminal stretch at Met-1–Ala-19 is a signal peptide. Residues Glu-20–Gly-62 constitute a propeptide that is removed on maturation. Intrachain disulfides connect Cys-65-Cys-93, Cys-67-Cys-82, and Cys-72-Cys-92.

This sequence belongs to the alpha-defensin family.

Its subcellular location is the secreted. In terms of biological role, microbicidal activity. This is Neutrophil antibiotic peptide NP-4 from Oryctolagus cuniculus (Rabbit).